Consider the following 630-residue polypeptide: 1-deoxy-D-xylulose-5-phosphate synthase (630 aa).

Residues histidine 72 and 113–115 (GHS) each bind thiamine diphosphate. A Mg(2+)-binding site is contributed by aspartate 144. Thiamine diphosphate is bound by residues 145–146 (GA), asparagine 173, tyrosine 284, and glutamate 367. Position 173 (asparagine 173) interacts with Mg(2+).

It belongs to the transketolase family. DXPS subfamily. In terms of assembly, homodimer. The cofactor is Mg(2+). Thiamine diphosphate is required as a cofactor.

The catalysed reaction is D-glyceraldehyde 3-phosphate + pyruvate + H(+) = 1-deoxy-D-xylulose 5-phosphate + CO2. It participates in metabolic intermediate biosynthesis; 1-deoxy-D-xylulose 5-phosphate biosynthesis; 1-deoxy-D-xylulose 5-phosphate from D-glyceraldehyde 3-phosphate and pyruvate: step 1/1. Catalyzes the acyloin condensation reaction between C atoms 2 and 3 of pyruvate and glyceraldehyde 3-phosphate to yield 1-deoxy-D-xylulose-5-phosphate (DXP). In Bacillus cereus (strain AH820), this protein is 1-deoxy-D-xylulose-5-phosphate synthase.